A 530-amino-acid chain; its full sequence is Cytochrome P450 monooxygenase apf7 (530 aa).

Residues 6-26 (VSPVSIWVFVIYAVTIIIAIY) form a helical membrane-spanning segment. N-linked (GlcNAc...) asparagine glycosylation is present at N85. C464 provides a ligand contact to heme.

This sequence belongs to the cytochrome P450 family. The cofactor is heme.

It is found in the membrane. The protein operates within secondary metabolite biosynthesis. Functionally, cytochrome P450 monooxygenase; part of the gene cluster that mediates the biosynthesis of the cyclic tetrapeptide apicidin F (APF). The non-ribosomal peptide synthetase apf1 incorporates four different amino acids to produce apicidin F: L-phenylalanine, D-pipecolic acid (D-pip), N-methoxy-L-tryptophan and L-2-aminooctanedioic acid. L-Phenylalanine is the only proteinogenic amino acid directly used by apf1. The 3 other apf1 substrates are non-proteinogenic and have to be modified by other enzymes of the cluster. Lysine is converted to delta-1-pyrroline-5-carboxylate (P5C) which is reduced to L-pipecolic acid (L-pip) by apf3. L-pip is epimerized to D-pip, probably by apf1 activity, prior to incorporation. L-Tryptophan is N-oxidyzed by one of the cytochrome P450 monooxygenases (apf7 or apf8), and further methylated at the hydroxy group by the O-methyltransferase apf6 to yield N-methoxy-L-tryptophan. The synthesis of the fourth apf1 substrate is more complex. The fatty acid synthase apf5 is involved in the synthesis of the octanoic acid backbone of L-2-aminooctanedioic acid by fixing one acetyl-CoA unit and three malonyl-CoA units. Then one of the cytochrome P450 monooxygenases (apf7 or apf8) may oxidize this backbone to 2-oxooctanoic acid. The aminotransferase apf4 is predicted to catalyze the exchange of the keto group with an amino group. The next step would be the oxidation of 2-aminooctanoic acid by one of the cytochrome P450 monooxygenases (apf7 or apf8). The last step is the oxidation of 2-amino-8-hydroxyoctanoic acid to 2-aminooctanedioic acid is catalyzed by the FAD-dependent monooxygenase apf9. The polypeptide is Cytochrome P450 monooxygenase apf7 (Gibberella fujikuroi (strain CBS 195.34 / IMI 58289 / NRRL A-6831) (Bakanae and foot rot disease fungus)).